The sequence spans 225 residues: Imidazoleglycerol-phosphate dehydratase (225 aa).

This sequence belongs to the imidazoleglycerol-phosphate dehydratase family.

The catalysed reaction is D-erythro-1-(imidazol-4-yl)glycerol 3-phosphate = 3-(imidazol-4-yl)-2-oxopropyl phosphate + H2O. The protein operates within amino-acid biosynthesis; L-histidine biosynthesis; L-histidine from 5-phospho-alpha-D-ribose 1-diphosphate: step 6/9. The polypeptide is Imidazoleglycerol-phosphate dehydratase (PTH3) (Pyricularia oryzae (strain 70-15 / ATCC MYA-4617 / FGSC 8958) (Rice blast fungus)).